The chain runs to 77 residues: Acyl carrier protein (77 aa).

Residues 2–77 form the Carrier domain; sequence STVEERVKKI…DAIDYIVAHT (76 aa). The residue at position 37 (S37) is an O-(pantetheine 4'-phosphoryl)serine.

This sequence belongs to the acyl carrier protein (ACP) family. 4'-phosphopantetheine is transferred from CoA to a specific serine of apo-ACP by AcpS. This modification is essential for activity because fatty acids are bound in thioester linkage to the sulfhydryl of the prosthetic group.

The protein resides in the cytoplasm. The protein operates within lipid metabolism; fatty acid biosynthesis. In terms of biological role, carrier of the growing fatty acid chain in fatty acid biosynthesis. The sequence is that of Acyl carrier protein from Marinobacter nauticus (strain ATCC 700491 / DSM 11845 / VT8) (Marinobacter aquaeolei).